A 143-amino-acid chain; its full sequence is Peptide methionine sulfoxide reductase MsrB (143 aa).

The MsrB domain occupies Asp-16 to Arg-139. Residues Cys-55, Cys-58, Cys-104, and Cys-107 each contribute to the Zn(2+) site. Cys-128 functions as the Nucleophile in the catalytic mechanism.

Belongs to the MsrB Met sulfoxide reductase family. Requires Zn(2+) as cofactor.

It carries out the reaction L-methionyl-[protein] + [thioredoxin]-disulfide + H2O = L-methionyl-(R)-S-oxide-[protein] + [thioredoxin]-dithiol. In Burkholderia orbicola (strain MC0-3), this protein is Peptide methionine sulfoxide reductase MsrB.